Here is a 327-residue protein sequence, read N- to C-terminus: Microtubule-associated protein RP/EB family member 2 (327 aa).

A compositionally biased stretch (polar residues) spans 1-17 (MPGPTQTLSPNGENNND). The segment at 1–20 (MPGPTQTLSPNGENNNDVIH) is disordered. In terms of domain architecture, Calponin-homology (CH) spans 56–158 (TMSRHDIIAW…FIQWFKKFFD (103 aa)). 2 disordered regions span residues 170-238 (EARQ…DKDL) and 295-327 (LYSSEEQESHTEQHEGEEEQEHGHEEAEQQEEY). The 71-residue stretch at 234–304 (SDKDLETQVS…LYSSEEQESH (71 aa)) folds into the EB1 C-terminal domain.

It belongs to the MAPRE family.

It is found in the cytoplasm. Its subcellular location is the cytoskeleton. Its function is as follows. May be involved in microtubule polymerization, and spindle function by stabilizing microtubules and anchoring them at centrosomes. This is Microtubule-associated protein RP/EB family member 2 (mapre2) from Xenopus laevis (African clawed frog).